Reading from the N-terminus, the 412-residue chain is Autophagy-related protein 18 (412 aa).

WD repeat units follow at residues 100 to 139 (RFNK…NIMD), 142 to 183 (TNKL…SVST), and 186 to 226 (AHEG…RLFE). A L/FRRG motif motif is present at residues 227–230 (FRRG). A WD 4 repeat occupies 232–271 (TRCVNIYSLCFSSDSKYLTSSSNTETVHVFKLEKTEGVDN). The interval 363 to 412 (HNIGPKSDTSRASPTSTGSGGAAKSAEASNQSVPNMDDPDDFPPMSHTSG) is disordered. Low complexity predominate over residues 372–391 (SRASPTSTGSGGAAKSAEAS).

This sequence belongs to the WD repeat PROPPIN family. In terms of tissue distribution, expressed in neurons and intestinal cells.

Its subcellular location is the cytoplasmic vesicle. The protein resides in the phagosome membrane. It is found in the cytoplasm. In terms of biological role, component of the autophagy machinery that is recruited to phosphatidylinositols on preautophagosomal structures, which are early autophagic structures, to promote autophagosome formation, and the subsequent degradation and clearance of engulfed apoptotic cells and P-granules in somatic cells. In particular, binds with high affinity to phosphatidylinositols including phosphatidylinositol 3-phosphate (PtdIns(3)P), phosphatidylinositol 4-phosphate (PtdIns(4)P), and phosphatidylinositol 5-phosphate (PtdIns(5)P), and more weakly to phosphatidylinositol 3,5-bisphosphate (PtdIns(3,5)P2). Plays a role in mitophagy, which is the autophagic consumption of mitochondria, in response to dietary restriction. Involved in xenophagy, the autophagy-mediated degradation of pathogens and pathogen products, such as toxins. Also plays a role in membrane-pore repair. In a daf-18/PTEN- and daf-16/FOXO-dependent manner, required for the proliferation of germ stem cell progenitors in the gonad during the late phases of larval development. By regulating the release of neurotransmitters and neuropeptides, involved in the control of lifespan in response to dietary restriction and daf-2 signaling. Probably through its involvement in autophagy, required for dauer formation. This chain is Autophagy-related protein 18, found in Caenorhabditis elegans.